The following is an 888-amino-acid chain: Serine/threonine-protein phosphatase 1 regulatory subunit 10 (888 aa).

The interaction with TOX4 stretch occupies residues 1-348 (MGSGPIDPKE…EPAPPAEPMD (348 aa)). The TFIIS N-terminal domain occupies 73-147 (KLLNNWLTYS…SDWMAVIRSQ (75 aa)). Disordered regions lie at residues 147–213 (QSST…STGL), 247–270 (SATA…NTAP), 306–400 (KKKK…KTVT), and 534–853 (VETL…HGGD). Basic and acidic residues-rich tracts occupy residues 153–166 (AEKD…EGKS) and 174–196 (PLTE…EKPK). A Glycyl lysine isopeptide (Lys-Gly) (interchain with G-Cter in SUMO2) cross-link involves residue Lys179. Residues 248-258 (ATAAPGDAAPP) are compositionally biased toward low complexity. A Glycyl lysine isopeptide (Lys-Gly) (interchain with G-Cter in SUMO2) cross-link involves residue Lys262. Ser313 bears the Phosphoserine mark. Positions 325–334 (KTSTEQSTAK) are enriched in polar residues. Phosphoserine is present on Ser382. The necessary for interaction with PPP1CA stretch occupies residues 388–417 (QLTRKGRKRKTVTWPEEGKLREYFYFELDE). Residues 393–408 (GRKRKTVTWPEEGKLR) form a necessary for interaction with PPP1CC region. The PP1-binding motif signature appears at 394–423 (RKRKTVTWPEEGKLREYFYFELDETERVNV). Phosphothreonine is present on Thr398. The interval 418–619 (TERVNVNKIK…LKQMLVPHGL (202 aa)) is interaction with WDR82. Over residues 540–551 (GGSGGSPDGAGG) the composition is skewed to gly residues. Phosphoserine occurs at positions 545 and 591. A compositionally biased stretch (polar residues) spans 583–595 (EILTSIMGSPNSH). Residues 596–611 (PSEELLKQPDYSDKLK) show a composition bias toward basic and acidic residues. The span at 644 to 655 (PPGPGGPMPGPH) shows a compositional bias: pro residues. Omega-N-methylarginine is present on Arg665. Residues 674–690 (RGGDPFWDGPGDPMRGG) show a composition bias toward low complexity. Omega-N-methylarginine occurs at positions 693 and 737. Gly residues-rich tracts occupy residues 724-762 (ARGG…GSMG) and 784-794 (GPGGNMGGSGG). The span at 811–851 (PHDVPSHRGHDHRGPPPHEHRGHDGHGGGGHRGHDGGHSHG) shows a compositional bias: basic and acidic residues. A C3H1-type zinc finger spans residues 854–882 (MSNRPVCRHFMMKGNCRYENNCAFYHPGV).

In terms of assembly, component of the PNUTS-PP1 complex (also named PTW/PP1 complex), composed of PPP1R10/PNUTS, TOX4, WDR82, and PPP1CA (or PPP1CB or PPP1CC). In terms of processing, phosphorylated on Ser-398 by PKA within the region necessary for interaction with PPP1CA.

The protein resides in the nucleus. The protein localises to the chromosome. In terms of biological role, substrate-recognition component of the PNUTS-PP1 protein phosphatase complex, a protein phosphatase 1 (PP1) complex that promotes RNA polymerase II transcription pause-release, allowing transcription elongation. Promoter-proximal pausing by RNA polymerase II is a transcription halt following transcription initiation but prior to elongation, which acts as a checkpoint to control that transcripts are favorably configured for transcriptional elongation. The PNUTS-PP1 complex mediates the release of RNA polymerase II from promoter-proximal region of genes by catalyzing dephosphorylation of proteins involved in transcription, such as AFF4, CDK9, MEPCE, INTS12, NCBP1, POLR2M/GDOWN1 and SUPT6H. The PNUTS-PP1 complex also regulates RNA polymerase II transcription termination by mediating dephosphorylation of SUPT5H in termination zones downstream of poly(A) sites, thereby promoting deceleration of RNA polymerase II transcription. PNUTS-PP1 complex is also involved in the response to replication stress by mediating dephosphorylation of POLR2A at 'Ser-5' of the CTD, promoting RNA polymerase II degradation. The PNUTS-PP1 complex also plays a role in the control of chromatin structure and cell cycle progression during the transition from mitosis into interphase. PNUTS-PP1 complex mediates dephosphorylation of MYC, promoting MYC stability by preventing MYC ubiquitination by the SCF(FBXW7) complex. In addition to acts as a substrate-recognition component, PPP1R10/PNUTS also acts as a nuclear targeting subunit for the PNUTS-PP1 complex. In some context, PPP1R10/PNUTS also acts as an inhibitor of protein phosphatase 1 (PP1) activity by preventing access to substrates, such as RB. This is Serine/threonine-protein phosphatase 1 regulatory subunit 10 from Mus musculus (Mouse).